A 288-amino-acid polypeptide reads, in one-letter code: Phosphatidylserine decarboxylase proenzyme (288 aa).

Catalysis depends on charge relay system; for autoendoproteolytic cleavage activity residues Asp-95, His-152, and Ser-255. Catalysis depends on Ser-255, which acts as the Schiff-base intermediate with substrate; via pyruvic acid; for decarboxylase activity. Position 255 is a pyruvic acid (Ser); by autocatalysis (Ser-255).

This sequence belongs to the phosphatidylserine decarboxylase family. PSD-B subfamily. Prokaryotic type I sub-subfamily. Heterodimer of a large membrane-associated beta subunit and a small pyruvoyl-containing alpha subunit. Pyruvate serves as cofactor. Is synthesized initially as an inactive proenzyme. Formation of the active enzyme involves a self-maturation process in which the active site pyruvoyl group is generated from an internal serine residue via an autocatalytic post-translational modification. Two non-identical subunits are generated from the proenzyme in this reaction, and the pyruvate is formed at the N-terminus of the alpha chain, which is derived from the carboxyl end of the proenzyme. The autoendoproteolytic cleavage occurs by a canonical serine protease mechanism, in which the side chain hydroxyl group of the serine supplies its oxygen atom to form the C-terminus of the beta chain, while the remainder of the serine residue undergoes an oxidative deamination to produce ammonia and the pyruvoyl prosthetic group on the alpha chain. During this reaction, the Ser that is part of the protease active site of the proenzyme becomes the pyruvoyl prosthetic group, which constitutes an essential element of the active site of the mature decarboxylase.

It localises to the cell membrane. The catalysed reaction is a 1,2-diacyl-sn-glycero-3-phospho-L-serine + H(+) = a 1,2-diacyl-sn-glycero-3-phosphoethanolamine + CO2. It functions in the pathway phospholipid metabolism; phosphatidylethanolamine biosynthesis; phosphatidylethanolamine from CDP-diacylglycerol: step 2/2. Its function is as follows. Catalyzes the formation of phosphatidylethanolamine (PtdEtn) from phosphatidylserine (PtdSer). This chain is Phosphatidylserine decarboxylase proenzyme, found in Methylococcus capsulatus (strain ATCC 33009 / NCIMB 11132 / Bath).